The following is a 487-amino-acid chain: Nitrate reductase beta chain (487 aa).

4Fe-4S ferredoxin-type domains follow at residues 7-36 (IGMV…RSGA), 172-203 (VFMM…KREE), and 205-234 (GIVL…FNWQ). The [4Fe-4S] cluster site is built by Cys16, Cys19, Cys22, Cys26, Cys181, Cys184, and Cys189. 3 residues coordinate [3Fe-4S] cluster: Cys193, Cys214, and Cys220. [4Fe-4S] cluster-binding residues include Cys224, Cys241, Cys244, Cys256, and Cys260.

[4Fe-4S] cluster is required as a cofactor. It depends on [3Fe-4S] cluster as a cofactor.

The protein resides in the cell membrane. The catalysed reaction is nitrate + a quinol = a quinone + nitrite + H2O. The beta chain is an electron transfer unit containing four cysteine clusters involved in the formation of iron-sulfur centers. Electrons are transferred from the gamma chain to the molybdenum cofactor of the alpha subunit. This chain is Nitrate reductase beta chain (narH), found in Bacillus subtilis (strain 168).